The sequence spans 283 residues: 4-diphosphocytidyl-2-C-methyl-D-erythritol kinase (283 aa).

Residue lysine 9 is part of the active site. ATP is bound at residue 93-103; the sequence is PIAAGLAGGSS. Aspartate 135 is an active-site residue.

The protein belongs to the GHMP kinase family. IspE subfamily.

The enzyme catalyses 4-CDP-2-C-methyl-D-erythritol + ATP = 4-CDP-2-C-methyl-D-erythritol 2-phosphate + ADP + H(+). Its pathway is isoprenoid biosynthesis; isopentenyl diphosphate biosynthesis via DXP pathway; isopentenyl diphosphate from 1-deoxy-D-xylulose 5-phosphate: step 3/6. Catalyzes the phosphorylation of the position 2 hydroxy group of 4-diphosphocytidyl-2C-methyl-D-erythritol. The protein is 4-diphosphocytidyl-2-C-methyl-D-erythritol kinase of Macrococcus caseolyticus (strain JCSC5402) (Macrococcoides caseolyticum).